A 214-amino-acid chain; its full sequence is Adenylate kinase (214 aa).

10–15 (GAGKGT) is a binding site for ATP. The NMP stretch occupies residues 30–59 (STGDMLRAAVKAGSELGLKAKEIMDAGKLV). AMP contacts are provided by residues Thr-31, Arg-36, 57–59 (KLV), 85–88 (GFPR), and Gln-92. An LID region spans residues 122-159 (GRRVHAASGRVYHVKFNPPKVEDKDDVTGEELTIRKDD). Residues Arg-123 and 132 to 133 (VY) contribute to the ATP site. AMP is bound by residues Arg-156 and Arg-167. Arg-200 contributes to the ATP binding site.

Belongs to the adenylate kinase family. In terms of assembly, monomer.

It localises to the cytoplasm. The catalysed reaction is AMP + ATP = 2 ADP. It functions in the pathway purine metabolism; AMP biosynthesis via salvage pathway; AMP from ADP: step 1/1. In terms of biological role, catalyzes the reversible transfer of the terminal phosphate group between ATP and AMP. Plays an important role in cellular energy homeostasis and in adenine nucleotide metabolism. In Yersinia pseudotuberculosis serotype O:1b (strain IP 31758), this protein is Adenylate kinase.